Here is a 302-residue protein sequence, read N- to C-terminus: Oligopeptide transport system permease protein OppC (302 aa).

Over M1–A38 the chain is Cytoplasmic. A helical transmembrane segment spans residues A39–L59. At S60–R102 the chain is on the periplasmic side. One can recognise an ABC transmembrane type-1 domain in the interval G101–G290. A helical transmembrane segment spans residues I103 to G123. Residues S124–M137 are Cytoplasmic-facing. A helical transmembrane segment spans residues M138–F160. Residues G161–N163 lie on the Periplasmic side of the membrane. Residues I164 to V183 form a helical membrane-spanning segment. The Cytoplasmic portion of the chain corresponds to R184–H213. Residues I214–I234 traverse the membrane as a helical segment. At L235–P269 the chain is on the periplasmic side. A helical transmembrane segment spans residues W270–G290. Over D291–R302 the chain is Cytoplasmic.

The protein belongs to the binding-protein-dependent transport system permease family. OppBC subfamily. The complex is composed of two ATP-binding proteins (OppD and OppF), two transmembrane proteins (OppB and OppC) and a solute-binding protein (OppA).

The protein localises to the cell inner membrane. Part of the ABC transporter complex OppABCDF involved in the uptake of oligopeptides. Probably responsible for the translocation of the substrate across the membrane. This chain is Oligopeptide transport system permease protein OppC (oppC), found in Escherichia coli O157:H7.